Reading from the N-terminus, the 230-residue chain is Large ribosomal subunit protein uL1 (230 aa).

This sequence belongs to the universal ribosomal protein uL1 family. Part of the 50S ribosomal subunit.

Functionally, binds directly to 23S rRNA. The L1 stalk is quite mobile in the ribosome, and is involved in E site tRNA release. Protein L1 is also a translational repressor protein, it controls the translation of the L11 operon by binding to its mRNA. The protein is Large ribosomal subunit protein uL1 of Nitrosospira multiformis (strain ATCC 25196 / NCIMB 11849 / C 71).